We begin with the raw amino-acid sequence, 428 residues long: C4-dicarboxylate transport protein (428 aa).

9 consecutive transmembrane segments (helical) span residues 4-24 (SLFK…ILLG), 44-64 (LIKM…IAGM), 76-96 (VALL…LIIV), 142-162 (IGAF…MFGF), 184-204 (VIFG…FGAM), 222-242 (LIVC…GSIA), 289-309 (VVGL…SIYL), 326-346 (IFHQ…AAGV), and 352-372 (IVLA…LALI).

The protein belongs to the dicarboxylate/amino acid:cation symporter (DAACS) (TC 2.A.23) family.

The protein localises to the cell inner membrane. Its function is as follows. Responsible for the transport of dicarboxylates such as succinate, fumarate, and malate from the periplasm across the membrane. The sequence is that of C4-dicarboxylate transport protein from Citrobacter koseri (strain ATCC BAA-895 / CDC 4225-83 / SGSC4696).